Here is a 112-residue protein sequence, read N- to C-terminus: Cytochrome c3 (112 aa).

The heme c site is built by His-26, His-29, Cys-34, Cys-37, His-38, His-39, Cys-49, Cys-54, His-55, His-73, Cys-83, Cys-86, His-87, Cys-104, Cys-109, and His-110.

Heme is required as a cofactor.

Functionally, participates in sulfate respiration coupled with phosphorylation by transferring electrons from the enzyme dehydrogenase to ferredoxin. This chain is Cytochrome c3, found in Megalodesulfovibrio gigas (strain ATCC 19364 / DSM 1382 / NCIMB 9332 / VKM B-1759) (Desulfovibrio gigas).